A 263-amino-acid polypeptide reads, in one-letter code: Imidazole glycerol phosphate synthase subunit HisF (263 aa).

Catalysis depends on residues Asp11 and Asp130.

Belongs to the HisA/HisF family. In terms of assembly, heterodimer of HisH and HisF.

The protein localises to the cytoplasm. It catalyses the reaction 5-[(5-phospho-1-deoxy-D-ribulos-1-ylimino)methylamino]-1-(5-phospho-beta-D-ribosyl)imidazole-4-carboxamide + L-glutamine = D-erythro-1-(imidazol-4-yl)glycerol 3-phosphate + 5-amino-1-(5-phospho-beta-D-ribosyl)imidazole-4-carboxamide + L-glutamate + H(+). The protein operates within amino-acid biosynthesis; L-histidine biosynthesis; L-histidine from 5-phospho-alpha-D-ribose 1-diphosphate: step 5/9. In terms of biological role, IGPS catalyzes the conversion of PRFAR and glutamine to IGP, AICAR and glutamate. The HisF subunit catalyzes the cyclization activity that produces IGP and AICAR from PRFAR using the ammonia provided by the HisH subunit. This Synechococcus sp. (strain CC9311) protein is Imidazole glycerol phosphate synthase subunit HisF.